We begin with the raw amino-acid sequence, 176 residues long: Probable inosine/xanthosine triphosphatase (176 aa).

Aspartate 36 provides a ligand contact to Mg(2+).

This sequence belongs to the YjjX NTPase family. In terms of assembly, homodimer. Mg(2+) serves as cofactor. Mn(2+) is required as a cofactor.

It carries out the reaction XTP + H2O = XDP + phosphate + H(+). It catalyses the reaction ITP + H2O = IDP + phosphate + H(+). In terms of biological role, phosphatase that hydrolyzes non-canonical purine nucleotides such as XTP and ITP to their respective diphosphate derivatives. Probably excludes non-canonical purines from DNA/RNA precursor pool, thus preventing their incorporation into DNA/RNA and avoiding chromosomal lesions. This Saccharolobus islandicus (strain M.16.4 / Kamchatka #3) (Sulfolobus islandicus) protein is Probable inosine/xanthosine triphosphatase.